The following is a 705-amino-acid chain: Elongation factor G (705 aa).

In terms of domain architecture, tr-type G spans 8 to 291; it reads EKVRNIGIMA…AVVEYLPSPI (284 aa). GTP-binding positions include 17 to 24, 90 to 94, and 144 to 147; these read AHIDAGKT, DTPGH, and NKMD.

It belongs to the TRAFAC class translation factor GTPase superfamily. Classic translation factor GTPase family. EF-G/EF-2 subfamily.

The protein resides in the cytoplasm. Functionally, catalyzes the GTP-dependent ribosomal translocation step during translation elongation. During this step, the ribosome changes from the pre-translocational (PRE) to the post-translocational (POST) state as the newly formed A-site-bound peptidyl-tRNA and P-site-bound deacylated tRNA move to the P and E sites, respectively. Catalyzes the coordinated movement of the two tRNA molecules, the mRNA and conformational changes in the ribosome. This is Elongation factor G from Chloroherpeton thalassium (strain ATCC 35110 / GB-78).